Consider the following 154-residue polypeptide: Prefoldin subunit 5 (154 aa).

An N-acetylalanine modification is found at alanine 2. Lysine 42 is modified (N6-acetyllysine). Serine 56 bears the Phosphoserine mark.

It belongs to the prefoldin subunit alpha family. Heterohexamer of two PFD-alpha type and four PFD-beta type subunits. Binds to MYC; interacts with its N-terminal domain. Highly expressed in pancreas and skeletal muscle and moderately in other tissues.

It is found in the nucleus. Its subcellular location is the cytoplasm. In terms of biological role, binds specifically to cytosolic chaperonin (c-CPN) and transfers target proteins to it. Binds to nascent polypeptide chain and promotes folding in an environment in which there are many competing pathways for nonnative proteins. Represses the transcriptional activity of MYC. This Homo sapiens (Human) protein is Prefoldin subunit 5 (PFDN5).